A 946-amino-acid polypeptide reads, in one-letter code: Protein translocase subunit SecA (946 aa).

ATP-binding positions include Gln87, 105 to 109 (GEGKT), and Asp524. Residues 904 to 933 (PAQTTDKADRDPNKPETWGKVGRNEDCPCG) are disordered. 4 residues coordinate Zn(2+): Cys930, Cys932, Cys941, and His942.

It belongs to the SecA family. In terms of assembly, monomer and homodimer. Part of the essential Sec protein translocation apparatus which comprises SecA, SecYEG and auxiliary proteins SecDF-YajC and YidC. It depends on Zn(2+) as a cofactor.

The protein localises to the cell inner membrane. The protein resides in the cytoplasm. The enzyme catalyses ATP + H2O + cellular proteinSide 1 = ADP + phosphate + cellular proteinSide 2.. In terms of biological role, part of the Sec protein translocase complex. Interacts with the SecYEG preprotein conducting channel. Has a central role in coupling the hydrolysis of ATP to the transfer of proteins into and across the cell membrane, serving both as a receptor for the preprotein-SecB complex and as an ATP-driven molecular motor driving the stepwise translocation of polypeptide chains across the membrane. The protein is Protein translocase subunit SecA of Rhodopseudomonas palustris (strain TIE-1).